Here is a 390-residue protein sequence, read N- to C-terminus: 3-ketoacyl-CoA thiolase (390 aa).

Catalysis depends on cysteine 95, which acts as the Acyl-thioester intermediate. Active-site proton acceptor residues include histidine 346 and cysteine 376.

Belongs to the thiolase-like superfamily. Thiolase family. Heterotetramer of two alpha chains (FadB) and two beta chains (FadA).

It localises to the cytoplasm. It catalyses the reaction an acyl-CoA + acetyl-CoA = a 3-oxoacyl-CoA + CoA. It participates in lipid metabolism; fatty acid beta-oxidation. Functionally, catalyzes the final step of fatty acid oxidation in which acetyl-CoA is released and the CoA ester of a fatty acid two carbons shorter is formed. The chain is 3-ketoacyl-CoA thiolase from Psychrobacter cryohalolentis (strain ATCC BAA-1226 / DSM 17306 / VKM B-2378 / K5).